A 512-amino-acid polypeptide reads, in one-letter code: 2,3-bisphosphoglycerate-independent phosphoglycerate mutase (512 aa).

Aspartate 11 and serine 61 together coordinate Mn(2+). Serine 61 acts as the Phosphoserine intermediate in catalysis. Substrate is bound by residues histidine 122, 152-153 (RD), arginine 184, arginine 190, 259-262 (RADR), and lysine 332. 5 residues coordinate Mn(2+): aspartate 399, histidine 403, aspartate 440, histidine 441, and histidine 459.

The protein belongs to the BPG-independent phosphoglycerate mutase family. In terms of assembly, monomer. Mn(2+) is required as a cofactor.

It catalyses the reaction (2R)-2-phosphoglycerate = (2R)-3-phosphoglycerate. The protein operates within carbohydrate degradation; glycolysis; pyruvate from D-glyceraldehyde 3-phosphate: step 3/5. Functionally, catalyzes the interconversion of 2-phosphoglycerate and 3-phosphoglycerate. This chain is 2,3-bisphosphoglycerate-independent phosphoglycerate mutase, found in Francisella tularensis subsp. holarctica (strain FTNF002-00 / FTA).